The primary structure comprises 124 residues: MKTCHIINRVGLSGVALLLTVSFTVSAVSENKRVDKFISCDNLTKSQIAAQVKRDFLQNRINHWSEDRKQLGTSKPVVWVKAENITGDKEILKIPLTVRGSKRDKDYRVVVDCQQNTISYSELK.

An N-terminal signal peptide occupies residues 1–27 (MKTCHIINRVGLSGVALLLTVSFTVSA). One can recognise a YebF/Cmi domain in the interval 36-123 (KFISCDNLTK…QQNTISYSEL (88 aa)). A disulfide bond links C40 and C113.

It belongs to the YebF family.

Its subcellular location is the secreted. The polypeptide is Protein YebF (Photorhabdus laumondii subsp. laumondii (strain DSM 15139 / CIP 105565 / TT01) (Photorhabdus luminescens subsp. laumondii)).